The chain runs to 95 residues: Aspartyl/glutamyl-tRNA(Asn/Gln) amidotransferase subunit C (95 aa).

This sequence belongs to the GatC family. As to quaternary structure, heterotrimer of A, B and C subunits.

The catalysed reaction is L-glutamyl-tRNA(Gln) + L-glutamine + ATP + H2O = L-glutaminyl-tRNA(Gln) + L-glutamate + ADP + phosphate + H(+). It catalyses the reaction L-aspartyl-tRNA(Asn) + L-glutamine + ATP + H2O = L-asparaginyl-tRNA(Asn) + L-glutamate + ADP + phosphate + 2 H(+). In terms of biological role, allows the formation of correctly charged Asn-tRNA(Asn) or Gln-tRNA(Gln) through the transamidation of misacylated Asp-tRNA(Asn) or Glu-tRNA(Gln) in organisms which lack either or both of asparaginyl-tRNA or glutaminyl-tRNA synthetases. The reaction takes place in the presence of glutamine and ATP through an activated phospho-Asp-tRNA(Asn) or phospho-Glu-tRNA(Gln). In Rhodopseudomonas palustris (strain BisB18), this protein is Aspartyl/glutamyl-tRNA(Asn/Gln) amidotransferase subunit C.